The sequence spans 266 residues: MIYSRSRLPSEGEILIATVKQVFDYGSYVTLDEYGGLQAFLPWSEVSSKWVKNIRDVLKENRKVVVKVIRVDRRKGTVDVSLKKVTDDERRKKNLQWKKIQRLDKILELVSQQLKLSEKDAWEQVAWKLEAKYGDPISAIERAVKEGEKILIDAGVPEIWIKPLLEEAAKHTEEKKVKMSGLITVKTSEPLGVQKIKEVISKALENIEQDYESILNVKIYTIGAPRYRVDVVGTNPKDASEALNQIISNLIKIGKEENVDISVVKK.

The 72-residue stretch at 12–83 (GEILIATVKQ…RKGTVDVSLK (72 aa)) folds into the S1 motif domain.

This sequence belongs to the eIF-2-alpha family. In terms of assembly, heterotrimer composed of an alpha, a beta and a gamma chain.

Functionally, eIF-2 functions in the early steps of protein synthesis by forming a ternary complex with GTP and initiator tRNA. In Saccharolobus islandicus (strain M.16.27) (Sulfolobus islandicus), this protein is Translation initiation factor 2 subunit alpha.